A 322-amino-acid chain; its full sequence is Ubiquinone biosynthesis O-methyltransferase, mitochondrial (322 aa).

Residues 1 to 37 (MLASVRVNQLQRLLLSARRLSSSPIIPPSRLLHQRLF) constitute a mitochondrion transit peptide. Residues 46 to 75 (AASFSSSHPKIQTLEGKASNKSRSTSSTTS) form a disordered region. 4 residues coordinate S-adenosyl-L-methionine: arginine 108, glycine 139, aspartate 160, and leucine 205. Residues glutamate 206, glutamate 209, and histidine 210 each coordinate Mg(2+).

It belongs to the class I-like SAM-binding methyltransferase superfamily. UbiG/COQ3 family. In terms of assembly, component of a multi-subunit COQ enzyme complex. It depends on Mg(2+) as a cofactor.

It is found in the mitochondrion inner membrane. It catalyses the reaction a 3,4-dihydroxy-5-(all-trans-polyprenyl)benzoate + S-adenosyl-L-methionine = a 4-hydroxy-3-methoxy-5-(all-trans-polyprenyl)benzoate + S-adenosyl-L-homocysteine + H(+). The enzyme catalyses a 3-demethylubiquinone + S-adenosyl-L-methionine = a ubiquinone + S-adenosyl-L-homocysteine. It carries out the reaction a 3-demethylubiquinol + S-adenosyl-L-methionine = a ubiquinol + S-adenosyl-L-homocysteine + H(+). The protein operates within cofactor biosynthesis; ubiquinone biosynthesis. O-methyltransferase required for two non-consecutive steps during ubiquinone biosynthesis. Catalyzes the 2 O-methylation of 3,4-dihydroxy-5-(all-trans-polyprenyl)benzoic acid into 4-hydroxy-3-methoxy-5-(all-trans-polyprenyl)benzoic acid. Also catalyzes the last step of ubiquinone biosynthesis by mediating methylation of 3-demethylubiquinone into ubiquinone. Also able to mediate the methylation of 3-demethylubiquinol into ubiquinol. In Arabidopsis thaliana (Mouse-ear cress), this protein is Ubiquinone biosynthesis O-methyltransferase, mitochondrial.